A 937-amino-acid chain; its full sequence is MCSEFLSELHWEDGFAIPVANQENKILEDQLAKLREEKSNLQDQLHDYEERINSMTSHLKNVNQEFLFTQSLYKARESEIESEEHFKAIAERELGRVKNETQLLEKEMAIIRERKSQMENNIFKTTQKLDDLKCQMNWDQQALEAWLEESAHKDSDSLTLQKYSQQDDNKIRALTLQLEKLTMEYNEKRKLLDSELTETLSAQLELDKAAQDFRKIHLERQELIQQWENTIEQMQRRDQEIDNCALALSRIKQEAREKEGVVKEKIKFLENEVENNIEYERKISVAERKVSKCRMDYQRHEGNRSQLKDELDTLKTTLNRTSSDLQALRKNISKVKKDIFDETLRLQKLKHHNEVVKHKLKMITEKTLSIEEKATNMEDMLKEEEKGLKEVEVQLGIVKDVLFKKVQELQNEIAKEKALVSEIEGTRSSLKHLNKQLHKLDFETLKQQEIMYSQDFYIQQVERRMSRLKGEINSEEKQALEAKILELKKTMDEKKSTLSLLESQIKKLHNDLYFIKKSNGKNNDEKESLMNKISELNLFIDRSEKELSKAKAVKEDMMIEDNLLKLQVKRARELLYSKAEEVLSLEKRKQQLGKDMEERAEEIKVHKAMLTSQIRCVEQQRKTMSSEFHERLSKIDKLKNRYEILTVVMLPPEGEEEKTQSYYVIKAAQEKEELQREGDSLDAKINKAEKEIYALQNTLQVLNSCNSNYKQSFKKVTPSSDEYALKIQLEEQKRTADERYRCKQRQIRELQEDIQSMENTFEVIGHLANNAKEKLTEKQTLAFQLRKETEEQKPKLQRITKQCGRLRREIRILKQTDNETLEEQDIQLREIIQFHKDIDQMLVNAMENAEIHAIFKTYFEQNGLELPTARGPSSRSSSQSSSLSSFRSLEDVTLQSPPTAKVIQLRFPEPPPATNDSSRSASSGSNSNIPKEKKLSK.

4 coiled-coil regions span residues 16–137 (AIPV…CQMN), 165–339 (QQDD…KKDI), 365–615 (EKTL…SQIR), and 664–816 (VIKA…LKQT). The interval 866 to 937 (LPTARGPSSR…NIPKEKKLSK (72 aa)) is disordered. A compositionally biased stretch (low complexity) spans 873-887 (SSRSSSQSSSLSSFR). 2 positions are modified to phosphoserine: Ser888 and Ser896. Residues 915-928 (NDSSRSASSGSNSN) show a composition bias toward low complexity.

Belongs to the CCDC39 family. As to expression, strongly expressed in tissues rich in ciliated cells. Expressed in olfactory and vomeronasal sensory neurons and the respiratory epithelium. Expressed in node cells carrying motile cilia, in upper and lower airways, and in ependymal and choroid plexus cells.

The protein localises to the cytoplasm. It is found in the cytoskeleton. It localises to the cilium axoneme. In terms of biological role, required for assembly of dynein regulatory complex (DRC) and inner dynein arm (IDA) complexes, which are responsible for ciliary beat regulation, thereby playing a central role in motility in cilia and flagella. Probably acts together with CCDC40 to form a molecular ruler that determines the 96 nanometer (nm) repeat length and arrangements of components in cilia and flagella. Not required for outer dynein arm complexes assembly. The sequence is that of Coiled-coil domain-containing protein 39 from Mus musculus (Mouse).